The primary structure comprises 331 residues: tRNA-modifying protein YgfZ (331 aa).

Residues Trp-28 and Trp-191 each contribute to the folate site.

It belongs to the tRNA-modifying YgfZ family.

Its subcellular location is the cytoplasm. Its function is as follows. Folate-binding protein involved in regulating the level of ATP-DnaA and in the modification of some tRNAs. It is probably a key factor in regulatory networks that act via tRNA modification, such as initiation of chromosomal replication. In Edwardsiella ictaluri (strain 93-146), this protein is tRNA-modifying protein YgfZ.